A 664-amino-acid polypeptide reads, in one-letter code: Fructose-1,6-bisphosphatase class 3 (664 aa).

It belongs to the FBPase class 3 family. Mn(2+) is required as a cofactor.

The catalysed reaction is beta-D-fructose 1,6-bisphosphate + H2O = beta-D-fructose 6-phosphate + phosphate. It participates in carbohydrate biosynthesis; gluconeogenesis. The sequence is that of Fructose-1,6-bisphosphatase class 3 from Bacteroides thetaiotaomicron (strain ATCC 29148 / DSM 2079 / JCM 5827 / CCUG 10774 / NCTC 10582 / VPI-5482 / E50).